A 92-amino-acid chain; its full sequence is Small ribosomal subunit protein uS19 (92 aa).

It belongs to the universal ribosomal protein uS19 family.

Functionally, protein S19 forms a complex with S13 that binds strongly to the 16S ribosomal RNA. This Rhizobium johnstonii (strain DSM 114642 / LMG 32736 / 3841) (Rhizobium leguminosarum bv. viciae) protein is Small ribosomal subunit protein uS19.